Here is a 177-residue protein sequence, read N- to C-terminus: Hypoxanthine phosphoribosyltransferase (177 aa).

Diphosphate contacts are provided by Arg-43 and Gly-44. Residue Glu-99 participates in GMP binding. An IMP-binding site is contributed by Glu-99. Glu-99 and Asp-100 together coordinate Mg(2+). Residue Asp-103 is the Proton acceptor of the active site. GMP contacts are provided by residues 103–108 (DSGKTL), Lys-131, and Asp-159. IMP is bound by residues 103–108 (DSGKTL) and Lys-131. Arg-165 contacts diphosphate.

The protein belongs to the purine/pyrimidine phosphoribosyltransferase family. As to quaternary structure, homotetramer. The cofactor is Mg(2+).

Its subcellular location is the cytoplasm. The enzyme catalyses IMP + diphosphate = hypoxanthine + 5-phospho-alpha-D-ribose 1-diphosphate. The catalysed reaction is GMP + diphosphate = guanine + 5-phospho-alpha-D-ribose 1-diphosphate. The protein operates within purine metabolism; IMP biosynthesis via salvage pathway; IMP from hypoxanthine: step 1/1. In terms of biological role, purine salvage pathway enzyme which catalyzes the transfer of the ribosyl-5-phosphate group from 5-phospho-alpha-D-ribose 1-diphosphate (PRPP) to the N9 position of hypoxanthine to yield IMP (inosine 5'-monophosphate). To a lesser extent, can also act on guanine leading to GMP, but shows a highly less efficient activity with xanthine. This Buchnera aphidicola subsp. Schizaphis graminum (strain Sg) protein is Hypoxanthine phosphoribosyltransferase (hpt).